Here is a 191-residue protein sequence, read N- to C-terminus: MGILYSEPICQAAYQNDLGQVWRWAKESNHYVDVQDSFNGDTPLICACRRGHLRIVSFLLRRNADVNLKNLKERTCLHYAVKKRFTFFDYLLIILLMPVLLIGYFLMVSKTKQNETLVRMLLNAGVEVNATDCDGYTALHYACQMKNQTLIPLLLEAHADPMIKNKHGESSLDIAQRLKFSQIALMLKRAS.

ANK repeat units lie at residues asparagine 39 to leucine 68, lysine 72 to leucine 100, leucine 101 to alanine 130, and aspartate 134 to isoleucine 163.

This Mus musculus (Mouse) protein is Ankyrin repeat domain-containing protein 22 (Ankrd22).